Consider the following 31-residue polypeptide: Chymotrypsin (31 aa).

The Peptidase S1 domain occupies 1–31 (IVGGVEAVPGVWPYQAALFIIDMYFCGGSLI).

The protein belongs to the peptidase S1 family.

Its subcellular location is the secreted. The protein resides in the extracellular space. The catalysed reaction is Preferential cleavage: Tyr-|-Xaa, Trp-|-Xaa, Phe-|-Xaa, Leu-|-Xaa.. The sequence is that of Chymotrypsin from Penaeus monodon (Giant tiger prawn).